The chain runs to 460 residues: UDP-glycosyltransferase 91C1 (460 aa).

UDP-alpha-D-glucose contacts are provided by residues Thr-283, 335-337, 352-360, and 374-377; these read VPQ, HCGWNSVVE, and LNEQ.

The protein belongs to the UDP-glycosyltransferase family.

The polypeptide is UDP-glycosyltransferase 91C1 (UGT91C1) (Arabidopsis thaliana (Mouse-ear cress)).